Here is a 350-residue protein sequence, read N- to C-terminus: (RS)-norcoclaurine 6-O-methyltransferase (350 aa).

M166 contributes to the S-adenosyl-L-methionine binding site. A substrate-binding site is contributed by D169. Residues T170, G195, D218, 238-239, and K252 each bind S-adenosyl-L-methionine; that span reads DM. Residues 253–257 and D306 each bind substrate; that span reads CILHD. H256 serves as the catalytic Proton acceptor.

The protein belongs to the class I-like SAM-binding methyltransferase superfamily. Cation-independent O-methyltransferase family. COMT subfamily. In terms of assembly, homodimer. In terms of tissue distribution, expressed in leaf primordia of rhizomes and root endodermis.

The enzyme catalyses (S)-norcoclaurine + S-adenosyl-L-methionine = (S)-coclaurine + S-adenosyl-L-homocysteine + H(+). It carries out the reaction norcoclaurine + S-adenosyl-L-methionine = coclaurine + S-adenosyl-L-homocysteine + H(+). Inhibited by sanguinarine. Its function is as follows. Involved in the biosynthesis of coclaurine, a precursor of benzylisoquinoline alkaloids. Catalyzes the transfer of the S-methyl group of S-adenosyl-L-methionine (AdoMet) to the 6-hydroxyl group of norcoclaurine to form coclaurine. In Thalictrum flavum subsp. glaucum (Yellow meadow rue), this protein is (RS)-norcoclaurine 6-O-methyltransferase.